We begin with the raw amino-acid sequence, 255 residues long: Ribosomal RNA small subunit methyltransferase J (255 aa).

Residues 107–108 (RD), 123–124 (ER), and aspartate 178 each bind S-adenosyl-L-methionine. The interval 228-247 (ARAEPLSGRKPSHQIPGKTT) is disordered.

The protein belongs to the methyltransferase superfamily. RsmJ family.

The protein localises to the cytoplasm. It catalyses the reaction guanosine(1516) in 16S rRNA + S-adenosyl-L-methionine = N(2)-methylguanosine(1516) in 16S rRNA + S-adenosyl-L-homocysteine + H(+). Its function is as follows. Specifically methylates the guanosine in position 1516 of 16S rRNA. This Thioalkalivibrio sulfidiphilus (strain HL-EbGR7) protein is Ribosomal RNA small subunit methyltransferase J.